The primary structure comprises 333 residues: uncharacterized protein (333 aa).

This sequence belongs to the polysaccharide synthase family.

This is an uncharacterized protein from Methanocaldococcus jannaschii (strain ATCC 43067 / DSM 2661 / JAL-1 / JCM 10045 / NBRC 100440) (Methanococcus jannaschii).